The chain runs to 500 residues: Cytochrome P450 726A27 (500 aa).

A helical; Signal-anchor for type II membrane protein transmembrane segment spans residues 7 to 27; sequence IPSYPIIFSFFIFIFMLIKIW. Cysteine 440 is a binding site for heme.

It belongs to the cytochrome P450 family. The cofactor is heme. Expressed in mature seeds.

It is found in the membrane. The enzyme catalyses (-)-casbene + reduced [NADPH--hemoprotein reductase] + O2 = 4-hydroxycasbene + oxidized [NADPH--hemoprotein reductase] + H2O + H(+). The catalysed reaction is 8-hydroxycasbene + reduced [NADPH--hemoprotein reductase] + O2 = 4,8-dihydroxycasbene + oxidized [NADPH--hemoprotein reductase] + H2O + H(+). It carries out the reaction 4,8-dihydroxycasbene + reduced [NADPH--hemoprotein reductase] + O2 = 4,5,8-trihydroxycasbene + oxidized [NADPH--hemoprotein reductase] + H2O + H(+). It functions in the pathway secondary metabolite biosynthesis; terpenoid biosynthesis. Its function is as follows. Involved in the biosynthesis of macrocyclic lathyrane type diterpenoids (also called Euphorbia factors) natural products, including the cyclization route from casbene to jolkinol C, a precursor for ingenol mebutate that is used to treat actinic keratosis, a precancerous skin condition. Catalyzes the hydroxylation of (-)-casbene and 8-hydroxycasbene to produce 4-hydroxycasbene and 4,8-dihydroxycasbene, respectively. The polypeptide is Cytochrome P450 726A27 (Euphorbia lathyris (Caper spurge)).